Reading from the N-terminus, the 472-residue chain is GTPase Der (472 aa).

2 EngA-type G domains span residues 3–166 (PVIA…PEQE) and 176–349 (IRIG…DSAM). GTP is bound by residues 9–16 (GRPNVGKS), 56–60 (DTGGI), 118–121 (NKID), 182–189 (GRPNVGKS), 229–233 (DTAGV), and 294–297 (NKWD). The KH-like domain maps to 350–434 (AKWSTNQLTT…PIRFEFRSGE (85 aa)). Residues 433 to 472 (GENPFAGKKNKLSPRQQKKKERLMKHVKKLKHKQKRKKSR) are disordered. Positions 440–472 (KKNKLSPRQQKKKERLMKHVKKLKHKQKRKKSR) are enriched in basic residues.

This sequence belongs to the TRAFAC class TrmE-Era-EngA-EngB-Septin-like GTPase superfamily. EngA (Der) GTPase family. As to quaternary structure, associates with the 50S ribosomal subunit.

Its function is as follows. GTPase that plays an essential role in the late steps of ribosome biogenesis. This chain is GTPase Der, found in Hahella chejuensis (strain KCTC 2396).